Consider the following 531-residue polypeptide: Cytochrome P450 monooxygenase peniB (531 aa).

Residues 30-48 form a helical membrane-spanning segment; sequence ILSIAAVVFLGYLLLRPLF. Cys445 contributes to the heme binding site.

This sequence belongs to the cytochrome P450 family. Heme serves as cofactor.

The protein localises to the membrane. The catalysed reaction is silphinene-15-oate + 2 reduced [NADPH--hemoprotein reductase] + 2 O2 = gamma-lactone-2-keto[5.5.5.5]fenestrane + 2 oxidized [NADPH--hemoprotein reductase] + 3 H2O + H(+). It functions in the pathway secondary metabolite biosynthesis; terpenoid biosynthesis. In terms of biological role, cytochrome P450 monooxygenase; part of the gene cluster that mediates the biosynthesis of penifulvin A, a potent insecticidal sesquiterpene that features a [5.5.5.6]dioxafenestrane ring. Within the pathway, peniB catalyzes the multi-step oxidation of silphinene to synthesize gamma-lactone-2-keto[5.5.5.5]fenestrane, including oxidation of the C15 methylgroup in silphinene to form silphinene-15-oic acid, activationof the C1-C2 double bond to form the gamma-lactone-2-hydroxy[5.5.5.5]fenestrane, and dehydrogenation of the hydroxy group at C2 of gamma-lactone-2-hydroxy[5.5.5.5]fenestrane to generate gamma-lactone-2-keto[5.5.5.5]fenestrane. The first step of the pathway is performed by the sesquiterpene cyclase peniA that generates the angular triquinane scaffold silphinene via cyclization of the linear farnesyl pyrophosphate (FPP). The cytochrome P450 monooxygenase peniB and the flavin-dependent monooxygenase peniC then catalyze a series of oxidation reactions to transform silphinene into penifulvin A. The protein is Cytochrome P450 monooxygenase peniB of Penicillium patulum (Penicillium griseofulvum).